A 382-amino-acid chain; its full sequence is MALISIRTSDDKIEIINQLLLPHVTEFVQIDTIEQAHDAIKTMKIRGAPAIASLAALSFSQYLSRALQASPLPEYFASPEALKNNLEPVLAYLFTARPTAVNLGAATRRLTTTLNQSIAQGKTTRSIAQDLIDEGKAIADEDVGRNKAMSKWGGDWLFDRVKAGGGSAEKGLNVLTVCNTGSLATSGYGTALGLITYLHETGKLEKAYYTQTAPYHQGSRLTALELKTLNIPSVMICDTMVGSLFQHFNIHAVVVGADRIAKNGDTANKIGTYNAAVIAARHNIPFIVVAPISTVDLAVESGLDIPIEQRPPIEACLVRGILYPNDGNSKQAQVMITPSGLDGIYNPSFDVTPAGLITAIVTEKGVAVKGEGENIFDLTPVV.

Asp258 serves as the catalytic Proton donor.

It belongs to the eIF-2B alpha/beta/delta subunits family. MtnA subfamily.

It is found in the cytoplasm. It localises to the nucleus. It catalyses the reaction 5-(methylsulfanyl)-alpha-D-ribose 1-phosphate = 5-(methylsulfanyl)-D-ribulose 1-phosphate. Its pathway is amino-acid biosynthesis; L-methionine biosynthesis via salvage pathway; L-methionine from S-methyl-5-thio-alpha-D-ribose 1-phosphate: step 1/6. Catalyzes the interconversion of methylthioribose-1-phosphate (MTR-1-P) into methylthioribulose-1-phosphate (MTRu-1-P). This is Methylthioribose-1-phosphate isomerase from Laccaria bicolor (strain S238N-H82 / ATCC MYA-4686) (Bicoloured deceiver).